The following is a 22-amino-acid chain: Chlorophyllase type 1 (22 aa).

This sequence belongs to the AB hydrolase superfamily. Lipase family.

The catalysed reaction is a chlorophyll + H2O = a chlorophyllide + phytol + H(+). It functions in the pathway porphyrin-containing compound metabolism; chlorophyll degradation. Catalyzes the hydrolysis of ester bond in chlorophyll to yield chlorophyllide and phytol. This chain is Chlorophyllase type 1, found in Chenopodium album (Fat hen).